The sequence spans 304 residues: Glutaminase (304 aa).

7 residues coordinate substrate: serine 61, asparagine 113, glutamate 158, asparagine 165, tyrosine 189, tyrosine 240, and valine 258.

This sequence belongs to the glutaminase family. As to quaternary structure, homotetramer.

The enzyme catalyses L-glutamine + H2O = L-glutamate + NH4(+). This is Glutaminase from Fusobacterium nucleatum subsp. nucleatum (strain ATCC 25586 / DSM 15643 / BCRC 10681 / CIP 101130 / JCM 8532 / KCTC 2640 / LMG 13131 / VPI 4355).